Reading from the N-terminus, the 606-residue chain is Aspartate--tRNA(Asp/Asn) ligase (606 aa).

E175 contributes to the L-aspartate binding site. An aspartate region spans residues 199–202 (QLFK). R221 contributes to the L-aspartate binding site. Residues 221 to 223 (RDE) and Q230 contribute to the ATP site. An L-aspartate-binding site is contributed by H453. E487 is a binding site for ATP. An L-aspartate-binding site is contributed by R494. ATP is bound at residue 539–542 (GWDR). The tract at residues 564–606 (GGVDPLTDAPGTIPAEQRKETGVDFKPEKAAKAAQGEKAGKES) is disordered. A compositionally biased stretch (basic and acidic residues) spans 579–594 (EQRKETGVDFKPEKAA).

It belongs to the class-II aminoacyl-tRNA synthetase family. Type 1 subfamily. Homodimer.

The protein localises to the cytoplasm. The catalysed reaction is tRNA(Asx) + L-aspartate + ATP = L-aspartyl-tRNA(Asx) + AMP + diphosphate. Aspartyl-tRNA synthetase with relaxed tRNA specificity since it is able to aspartylate not only its cognate tRNA(Asp) but also tRNA(Asn). Reaction proceeds in two steps: L-aspartate is first activated by ATP to form Asp-AMP and then transferred to the acceptor end of tRNA(Asp/Asn). In Corynebacterium aurimucosum (strain ATCC 700975 / DSM 44827 / CIP 107346 / CN-1) (Corynebacterium nigricans), this protein is Aspartate--tRNA(Asp/Asn) ligase.